Here is a 526-residue protein sequence, read N- to C-terminus: Probable di/tripeptide-binding protein 5 (526 aa).

The first 21 residues, 1–21, serve as a signal peptide directing secretion; it reads MRLAAFSLFLAPLLLAQPAAA.

Belongs to the bacterial solute-binding protein 5 family. The complex is composed of two ATP-binding proteins (DppD and DppF), two transmembrane proteins (DppB and DppC) and a solute-binding protein (DppA5). Five orthologous SBPs (DppA1-A5) are present in P.aeruginosa, which increases the substrate specificity of the DppBCDF transporter.

In terms of biological role, part of the ABC transporter DppABCDF involved in the uptake of various di/tripeptides. The polypeptide is Probable di/tripeptide-binding protein 5 (Pseudomonas aeruginosa (strain UCBPP-PA14)).